We begin with the raw amino-acid sequence, 473 residues long: Crt homolog 1 (473 aa).

The Cytoplasmic portion of the chain corresponds to 1–49 (MTNNDKEKQPLLSSINNEDDNGATINIVEPVPWYSNIPQKIKNSMSKET). The chain crosses the membrane as a helical span at residues 50–70 (ITILIYVVLYVTSGVINSVLL). Residues 71-80 (KKVMNKFTNY) lie on the Vacuolar side of the membrane. Residues 81–101 (AFFLSQLTNFGYVPIFGAVTA) form a helical membrane-spanning segment. The Cytoplasmic segment spans residues 102–121 (YKIFFTKDIPQETRDFPTRK). A helical transmembrane segment spans residues 122-142 (FAIMGALDAITGFFVVIGGVS). Residues 143-146 (TSGP) are Vacuolar-facing. A helical transmembrane segment spans residues 147 to 167 (LQQLLNQAIIPFTMIASFIFL). Topologically, residues 168–175 (KERYSLIQ) are cytoplasmic. A helical transmembrane segment spans residues 176–196 (LGGALVIIGGVVTSLIPSLLG). Residues 197 to 207 (GSSGGNKPFWN) lie on the Vacuolar side of the membrane. Residues 208-228 (FFYLLSVIPGALSNVYKDIGF) traverse the membrane as a helical segment. Topologically, residues 229-248 (QAVADMDVWYLQYWDSLYQS) are cytoplasmic. A helical transmembrane segment spans residues 249–269 (IFGLFLFPVNNWLPPPATVKF). Residues 270–322 (EQILPFMKEGAECLAGINSIIPSYINGTSSFTATSCTYAPDATITCDDCHNAW) are Vacuolar-facing. The N-linked (GlcNAc...) asparagine glycan is linked to Asn-295. Residues 323 to 343 (IVIILYMTINIIYNIFILLVL) form a helical membrane-spanning segment. The Cytoplasmic portion of the chain corresponds to 344 to 352 (KHAGATVYS). Residues 353–373 (IANTLRLPLTNIVFSIHFIMG) form a helical membrane-spanning segment. A topological domain (vacuolar) is located at residue Ser-374. A helical membrane pass occupies residues 375–395 (AVSPFSGLSVAGLVIILVGLG). At 396-473 (GYRVGSMIKQ…AANNNNYGDA (78 aa)) the chain is on the cytoplasmic side.

It belongs to the CRT-like transporter family.

It is found in the vacuole membrane. Nutrient transporter. Involved in maintaining the osmotic homeostasis of the digestive vacuole. This chain is Crt homolog 1 (crtp1), found in Dictyostelium discoideum (Social amoeba).